The chain runs to 649 residues: Quinol oxidase subunit 1 (649 aa).

Residues 1–13 lie on the Extracellular side of the membrane; the sequence is MKFKWDEFFVTGD. Residues 14 to 34 form a helical membrane-spanning segment; that stretch reads PLILGAQVSIALSTIAIIFVL. Over 35-55 the chain is Cytoplasmic; the sequence is TYFKKWKWLWSEWITTVDHKK. A helical membrane pass occupies residues 56–76; it reads LGIMYIISAVIMLFRGGVDGL. The Extracellular segment spans residues 77-104; it reads MMRAQLALPNNSFLDSNHYNEIFTTHGT. H102 serves as a coordination point for Fe(II)-heme a. The helical transmembrane segment at 105 to 125 threads the bilayer; it reads IMIIFMAMPFLIGLINVVVPL. Topologically, residues 126–139 are cytoplasmic; the sequence is QIGARDVAFPYLNN. A helical membrane pass occupies residues 140–160; sequence LSFWTFFVGAMLFNISFVIGG. Residues 161 to 187 are Extracellular-facing; the sequence is SPNAGWTSYMPLASNDMSPGPGENYYL. The helical transmembrane segment at 188-208 threads the bilayer; sequence LGLQIAGIGTLMTGINFMVTI. Residues 209 to 228 lie on the Cytoplasmic side of the membrane; sequence LKMRTKGMTLMRMPMFTWTT. The helical transmembrane segment at 229 to 249 threads the bilayer; the sequence is LITMVIIVFAFPVLTVALALL. At 250–273 the chain is on the extracellular side; it reads SFDRLFGAHFFTLEAGGMPMLWAN. Residues 274 to 294 form a helical membrane-spanning segment; the sequence is LFWIWGHPEVYIVILPAFGIF. The Cu cation site is built by H280 and Y284. Positions 280–284 form a cross-link, 1'-histidyl-3'-tyrosine (His-Tyr); sequence HPEVY. Residues 295–305 are Cytoplasmic-facing; the sequence is SEIISSFARKQ. Residues 306-326 form a helical membrane-spanning segment; the sequence is LFGYTAMVGSIIAISVLSFLV. The Extracellular segment spans residues 327-342; it reads WTHHFFTMGNSASVNS. Positions 329 and 330 each coordinate Cu cation. A helical membrane pass occupies residues 343-363; it reads FFSITTMAISIPTGVKIFNWL. At 364 to 376 the chain is on the cytoplasmic side; the sequence is FTMYKGRISFTTP. A helical membrane pass occupies residues 377–397; the sequence is MLWALAFIPNFVIGGVTGVML. Topologically, residues 398 to 415 are extracellular; it reads AMAAADYQYHNTYFLVSH. Position 415 (H415) interacts with heme a3. Residues 416-436 form a helical membrane-spanning segment; that stretch reads FHYVLIAGTVFACFAGFIFWY. H417 lines the Fe(II)-heme a pocket. Residues 437–451 lie on the Cytoplasmic side of the membrane; sequence PKMFGHKLNERIGKW. The chain crosses the membrane as a helical span at residues 452 to 472; that stretch reads FFWIFMIGFNICFFPQYFLGL. Residues 473–492 are Extracellular-facing; it reads QGMPRRIYTYGPNDGWTTLN. A helical membrane pass occupies residues 493–513; that stretch reads FISTVGAFMMGVGFLILCYNI. Residues 514–585 lie on the Cytoplasmic side of the membrane; sequence YYSFRYSTRE…KFKKIHMPSN (72 aa). A helical membrane pass occupies residues 586 to 603; sequence SGRPFFMSVAFGIAGFGL. The Extracellular segment spans residues 604–606; sequence VFE. The chain crosses the membrane as a helical span at residues 607 to 624; sequence WYWMGVVGLIGVLLCMVL. Residues 625–649 lie on the Cytoplasmic side of the membrane; that stretch reads RSFEYDNGYYISVDEIKETERKISE.

Belongs to the heme-copper respiratory oxidase family. The cofactor is Cu cation. Ferriheme a is required as a cofactor. It depends on Heme A3. as a cofactor.

It is found in the cell membrane. The enzyme catalyses 2 a quinol + O2 = 2 a quinone + 2 H2O. It participates in energy metabolism; oxidative phosphorylation. In terms of biological role, catalyzes quinol oxidation with the concomitant reduction of oxygen to water. Major component for energy conversion during vegetative growth. The protein is Quinol oxidase subunit 1 (qoxB) of Bacillus spizizenii (strain ATCC 23059 / NRRL B-14472 / W23) (Bacillus subtilis subsp. spizizenii).